The following is a 211-amino-acid chain: Urease accessory protein UreF (211 aa).

Positions 71–93 are disordered; it reads DDADRETDARTPAPAARHASRSQ.

This sequence belongs to the UreF family. UreD, UreF and UreG form a complex that acts as a GTP-hydrolysis-dependent molecular chaperone, activating the urease apoprotein by helping to assemble the nickel containing metallocenter of UreC. The UreE protein probably delivers the nickel.

It is found in the cytoplasm. Its function is as follows. Required for maturation of urease via the functional incorporation of the urease nickel metallocenter. The chain is Urease accessory protein UreF from Mycobacterium bovis (strain ATCC BAA-935 / AF2122/97).